Reading from the N-terminus, the 366-residue chain is Anhydro-N-acetylmuramic acid kinase (366 aa).

12–19 (GTSLDGID) serves as a coordination point for ATP.

This sequence belongs to the anhydro-N-acetylmuramic acid kinase family.

The enzyme catalyses 1,6-anhydro-N-acetyl-beta-muramate + ATP + H2O = N-acetyl-D-muramate 6-phosphate + ADP + H(+). Its pathway is amino-sugar metabolism; 1,6-anhydro-N-acetylmuramate degradation. The protein operates within cell wall biogenesis; peptidoglycan recycling. In terms of biological role, catalyzes the specific phosphorylation of 1,6-anhydro-N-acetylmuramic acid (anhMurNAc) with the simultaneous cleavage of the 1,6-anhydro ring, generating MurNAc-6-P. Is required for the utilization of anhMurNAc either imported from the medium or derived from its own cell wall murein, and thus plays a role in cell wall recycling. This is Anhydro-N-acetylmuramic acid kinase from Nitrosospira multiformis (strain ATCC 25196 / NCIMB 11849 / C 71).